Consider the following 484-residue polypeptide: Protein arginine methyltransferase NDUFAF7 homolog, mitochondrial (484 aa).

Residues Met-1 to Asn-12 constitute a mitochondrion transit peptide.

The protein belongs to the NDUFAF7 family. As to quaternary structure, homodimer. Interacts with ndufs2.

It localises to the mitochondrion. It catalyses the reaction L-arginyl-[protein] + 2 S-adenosyl-L-methionine = N(omega),N(omega)'-dimethyl-L-arginyl-[protein] + 2 S-adenosyl-L-homocysteine + 2 H(+). Functionally, involved in the assembly or stability of mitochondrial NADH:ubiquinone oxidoreductase complex (complex I). Acts as an arginine methyltransferase and probably acts by mediating arginine methylation of ndufs2. This is Protein arginine methyltransferase NDUFAF7 homolog, mitochondrial from Dictyostelium discoideum (Social amoeba).